A 340-amino-acid chain; its full sequence is uncharacterized protein (340 aa).

The disordered stretch occupies residues 284–340 (DHSTPTNYQQETPASQQQLDQENEPIKPSKKSNSSSLPRGTTQPKSNSINRVSKLID). 2 stretches are compositionally biased toward polar residues: residues 286-303 (STPT…QQLD) and 320-334 (LPRG…SINR).

This is an uncharacterized protein from Mycoplasma genitalium (strain ATCC 33530 / DSM 19775 / NCTC 10195 / G37) (Mycoplasmoides genitalium).